Consider the following 77-residue polypeptide: EMBRYO SURROUNDING FACTOR 1-like protein 9 (77 aa).

An N-terminal signal peptide occupies residues Met1–Cys22. 4 disulfide bridges follow: Cys38/Cys54, Cys43/Cys75, Cys52/Cys71, and Cys55/Cys64.

The protein belongs to the MEG family. As to expression, expressed in flowers.

This Arabidopsis thaliana (Mouse-ear cress) protein is EMBRYO SURROUNDING FACTOR 1-like protein 9 (ESFL9).